The sequence spans 135 residues: Ribosome-binding factor A (135 aa).

This sequence belongs to the RbfA family. In terms of assembly, monomer. Binds 30S ribosomal subunits, but not 50S ribosomal subunits or 70S ribosomes.

Its subcellular location is the cytoplasm. One of several proteins that assist in the late maturation steps of the functional core of the 30S ribosomal subunit. Associates with free 30S ribosomal subunits (but not with 30S subunits that are part of 70S ribosomes or polysomes). Required for efficient processing of 16S rRNA. May interact with the 5'-terminal helix region of 16S rRNA. This chain is Ribosome-binding factor A, found in Bartonella quintana (strain Toulouse) (Rochalimaea quintana).